Reading from the N-terminus, the 165-residue chain is 3-hydroxyacyl-[acyl-carrier-protein] dehydratase FabZ (165 aa).

His64 is a catalytic residue.

Belongs to the thioester dehydratase family. FabZ subfamily.

Its subcellular location is the cytoplasm. It catalyses the reaction a (3R)-hydroxyacyl-[ACP] = a (2E)-enoyl-[ACP] + H2O. Functionally, involved in unsaturated fatty acids biosynthesis. Catalyzes the dehydration of short chain beta-hydroxyacyl-ACPs and long chain saturated and unsaturated beta-hydroxyacyl-ACPs. This chain is 3-hydroxyacyl-[acyl-carrier-protein] dehydratase FabZ, found in Acidiphilium cryptum (strain JF-5).